The chain runs to 99 residues: Endothelin receptor type B (99 aa).

Topologically, residues 1 to 8 are extracellular; it reads PFGAEMCK. The cysteines at positions 7 and 88 are disulfide-linked. The helical transmembrane segment at 9–30 threads the bilayer; sequence LVPFIQKASVGITVLSLCALSI. The Cytoplasmic segment spans residues 31–51; the sequence is DRYRAVASWSRIKGIGIPKWT. A helical membrane pass occupies residues 52 to 76; the sequence is AVEIVLIWVVSVVLAVPEAIGFDMI. Residues 77 to 99 lie on the Extracellular side of the membrane; the sequence is TMDYKGSYLRICLLHPVQKTAFM.

It belongs to the G-protein coupled receptor 1 family. Endothelin receptor subfamily. EDNRB sub-subfamily.

Its subcellular location is the cell membrane. In terms of biological role, non-specific receptor for endothelin 1, 2, and 3. Mediates its action by association with G proteins that activate a phosphatidylinositol-calcium second messenger system. This Macaca fascicularis (Crab-eating macaque) protein is Endothelin receptor type B (EDNRB).